The sequence spans 139 residues: Actin-depolymerizing factor 6 (139 aa).

Positions 5-139 (ASGMAVGDEC…SMDIVKARAL (135 aa)) constitute an ADF-H domain.

The protein belongs to the actin-binding proteins ADF family.

Its function is as follows. Actin-depolymerizing protein. Severs actin filaments (F-actin) and binds to actin monomers. The polypeptide is Actin-depolymerizing factor 6 (ADF6) (Oryza sativa subsp. japonica (Rice)).